Reading from the N-terminus, the 705-residue chain is uncharacterized protein (705 aa).

The segment at residues 24–52 is a DNA-binding region (zn(2)-C6 fungal-type); sequence CHFCRVRKLKCDRVRPFCGSCSSRNRKQC.

The protein resides in the nucleus. This is an uncharacterized protein from Saccharomyces cerevisiae (strain ATCC 204508 / S288c) (Baker's yeast).